Consider the following 230-residue polypeptide: 3-beta-hydroxysteroid-Delta(8),Delta(7)-isomerase (230 aa).

Thr2 bears the N-acetylthreonine mark. 4 helical membrane passes run 29-49 (SHIL…TWLL), 66-86 (LCWF…FSLY), 121-141 (METV…IAFL), and 185-205 (FWFY…ILVL). The 144-residue stretch at 61–204 (GRRLALCWFA…VWLVIPSILV (144 aa)) folds into the EXPERA domain.

It belongs to the EBP family.

It is found in the endoplasmic reticulum membrane. The protein resides in the nucleus envelope. Its subcellular location is the cytoplasmic vesicle. It catalyses the reaction lathosterol = 5alpha-cholest-8-en-3beta-ol. The enzyme catalyses zymosterol = 5alpha-cholesta-7,24-dien-3beta-ol. It carries out the reaction 5,6alpha-epoxy-5alpha-cholestan-3beta-ol + H2O = 5alpha-cholestane-3beta,5,6beta-triol. The catalysed reaction is 5,6beta-epoxy-5beta-cholestan-3beta-ol + H2O = 5alpha-cholestane-3beta,5,6beta-triol. The protein operates within steroid biosynthesis; cholesterol biosynthesis. Functionally, isomerase that catalyzes the conversion of Delta(8)-sterols to their corresponding Delta(7)-isomers. Its function is as follows. Component of the microsomal antiestrogen binding site (AEBS), a multiproteic complex at the ER membrane that consists of an association between EBP and 7-dehydrocholesterol reductase/DHCR7. This complex is responsible for cholesterol-5,6-epoxide hydrolase (ChEH) activity, which consists in the hydration of cholesterol-5,6-epoxides (5,6-EC) into cholestane-3beta,5alpha,6beta-triol (CT). The precise role of each component of this complex has not been described yet. The protein is 3-beta-hydroxysteroid-Delta(8),Delta(7)-isomerase of Mus musculus (Mouse).